The primary structure comprises 425 residues: Zinc finger protein 789 (425 aa).

Residues 11–82 (LSFEDVAMYF…DLPRTGNRKA (72 aa)) form the KRAB domain. 8 consecutive C2H2-type zinc fingers follow at residues 201–223 (YECSECGKVIRRKAWFDQHQRIH), 229–251 (FECKVCGQAFRQRSALTVHKQCH), 257–279 (YRCHDCGKCFRQLAYLVEHKRIH), 285–307 (YKCSKCEKTFSQNSTLIRHQVIH), 313–335 (HKCLECGKAFGRHSTLLCHQQIH), 341–363 (HKCSECGQSFGRNVDLIQHQRIH), 369–391 (FQCGECGKTFSFKRNLFRHQVIH), and 397–419 (YQCVICGKSFKWHTSFIKHQGTH).

The protein belongs to the krueppel C2H2-type zinc-finger protein family.

The protein resides in the nucleus. May be involved in transcriptional regulation. This Homo sapiens (Human) protein is Zinc finger protein 789 (ZNF789).